The following is a 211-amino-acid chain: Transcriptional regulatory protein LiaR (211 aa).

A Response regulatory domain is found at 3 to 119 (RVLLIDDHEM…EIADAIRAAS (117 aa)). Asp-54 carries the 4-aspartylphosphate modification. The region spanning 143 to 208 (NALPHESLTK…QAAVYAHRNH (66 aa)) is the HTH luxR-type domain. Positions 167-186 (NKEIGEELFITIKTVKTHIT) form a DNA-binding region, H-T-H motif.

Phosphorylated by LiaS.

The protein resides in the cytoplasm. In terms of biological role, member of the two-component regulatory system LiaS/LiaR probably involved in response to a subset of cell wall-active antibiotics that interfere with the lipid II cycle in the cytoplasmic membrane (bacitracin, nisin, ramoplanin and vancomycin). Also seems to be involved in response to cationic antimicrobial peptides and secretion stress. LiaR regulates the transcription of the liaIHGFSR operon. The polypeptide is Transcriptional regulatory protein LiaR (liaR) (Bacillus subtilis (strain 168)).